A 465-amino-acid polypeptide reads, in one-letter code: Protein hedgehog (465 aa).

A lipid anchor (N-palmitoyl cysteine) is attached at cysteine 79. 7 residues coordinate Ca(2+): glutamate 143, glutamate 144, aspartate 149, threonine 179, glutamate 180, aspartate 183, and aspartate 185. Glycine 251 carries the Cholesterol glycine ester lipid modification.

This sequence belongs to the hedgehog family. Interacts with shf. Post-translationally, the C-terminal part of the hedgehog protein precursor displays an autoproteolysis activity that results in the cleavage of the full-length protein into two parts (N-product and C-product). In addition, the C-terminal part displays a cholesterol transferase activity that results by the covalent attachment of a cholesterol moiety to the C-terminal of the newly generated N-product. The N-product is the active species in both local and long-range signaling, whereas the C-product has no signaling activity. In terms of processing, cholesterylation is required for N-product targeting to lipid rafts and multimerization. N-palmitoylation by Rasp of the hedgehog N-product, within the secretory pathway, is required for the embryonic and larval patterning activities of the hedgehog signal.

The protein localises to the nucleus. It localises to the cytoplasm. It is found in the cell membrane. The enzyme catalyses glycyl-L-cysteinyl-[protein] + cholesterol + H(+) = [protein]-C-terminal glycyl cholesterol ester + N-terminal L-cysteinyl-[protein]. Its function is as follows. The C-terminal part of the hedgehog protein precursor displays an autoproteolysis activity that results in the cleavage of the full-length protein into two parts (N-product and C-product). In addition, the C-terminal part displays a cholesterol transferase activity that results by the covalent attachment of a cholesterol moiety to the C-terminal of the newly generated N-product. Once cleaved, the C-product has no signaling activity and diffuses from the cell. In terms of biological role, the dually lipidated hedgehog protein N-product is a morphogen which is essential for a variety of patterning events during development. Establishes the anterior-posterior axis of the embryonic segments and patterns the larval imaginal disks. Binds to the patched (ptc) receptor, which functions in association with smoothened (smo), to activate the transcription of target genes wingless (wg), decapentaplegic (dpp) and ptc. In the absence of hh, ptc represses the constitutive signaling activity of smo through fused (fu). Essential component of a signaling pathway which regulates the Duox-dependent gut immune response to bacterial uracil; required to activate Cad99C-dependent endosome formation, norpA-dependent Ca2+ mobilization and p38 MAPK, which are essential steps in the Duox-dependent production of reactive oxygen species (ROS) in response to intestinal bacterial infection. During photoreceptor differentiation, it up-regulates transcription of Ubr3, which in turn promotes the hh-signaling pathway by mediating the ubiquitination and degradation of cos. The sequence is that of Protein hedgehog from Drosophila erecta (Fruit fly).